A 358-amino-acid chain; its full sequence is Photosystem II protein D1 2 (358 aa).

The next 3 membrane-spanning stretches (helical) occupy residues Tyr28–Ile45, His117–Leu132, and Trp141–Ala155. His117 is a binding site for chlorophyll a. A pheophytin a-binding site is contributed by Tyr125. [CaMn4O5] cluster-binding residues include Asp169 and Glu188. A helical membrane pass occupies residues Phe196–Leu217. Residue His197 coordinates chlorophyll a. A quinone contacts are provided by residues His214 and Ser263–Phe264. His214 lines the Fe cation pocket. His271 serves as a coordination point for Fe cation. A helical membrane pass occupies residues Phe273–Met287. [CaMn4O5] cluster contacts are provided by His331, Glu332, Asp341, and Ala343. Positions Thr344 to Gly358 are excised as a propeptide.

It belongs to the reaction center PufL/M/PsbA/D family. In terms of assembly, PSII is composed of 1 copy each of membrane proteins PsbA, PsbB, PsbC, PsbD, PsbE, PsbF, PsbH, PsbI, PsbJ, PsbK, PsbL, PsbM, PsbT, PsbX, PsbY, PsbZ, Psb30/Ycf12, peripheral proteins PsbO, CyanoQ (PsbQ), PsbU, PsbV and a large number of cofactors. It forms dimeric complexes. The cofactor is The D1/D2 heterodimer binds P680, chlorophylls that are the primary electron donor of PSII, and subsequent electron acceptors. It shares a non-heme iron and each subunit binds pheophytin, quinone, additional chlorophylls, carotenoids and lipids. D1 provides most of the ligands for the Mn4-Ca-O5 cluster of the oxygen-evolving complex (OEC). There is also a Cl(-1) ion associated with D1 and D2, which is required for oxygen evolution. The PSII complex binds additional chlorophylls, carotenoids and specific lipids.. In terms of processing, tyr-160 forms a radical intermediate that is referred to as redox-active TyrZ, YZ or Y-Z. C-terminally processed by CtpA; processing is essential to allow assembly of the oxygen-evolving complex and thus photosynthetic growth.

The protein localises to the cellular thylakoid membrane. The enzyme catalyses 2 a plastoquinone + 4 hnu + 2 H2O = 2 a plastoquinol + O2. Its function is as follows. Photosystem II (PSII) is a light-driven water:plastoquinone oxidoreductase that uses light energy to abstract electrons from H(2)O, generating O(2) and a proton gradient subsequently used for ATP formation. It consists of a core antenna complex that captures photons, and an electron transfer chain that converts photonic excitation into a charge separation. The D1/D2 (PsbA/PsbD) reaction center heterodimer binds P680, the primary electron donor of PSII as well as several subsequent electron acceptors. This is Photosystem II protein D1 2 from Parasynechococcus marenigrum (strain WH8102).